Consider the following 591-residue polypeptide: Serine/threonine-protein kinase Nek2 (591 aa).

One can recognise a Protein kinase domain in the interval 4–258 (YEVLEQIGKG…AAQLLKHPQL (255 aa)). Residues 10–18 (IGKGAFGSA) and Lys33 each bind ATP. The Proton acceptor role is filled by Asp129. Disordered regions lie at residues 309-331 (LGNE…SSTR), 387-408 (EPPK…TTPN), and 500-534 (RTDG…DTSS). 2 stretches are compositionally biased toward polar residues: residues 391–408 (TSYN…TTPN) and 504–534 (DNGS…DTSS).

The protein belongs to the protein kinase superfamily. NEK Ser/Thr protein kinase family. NIMA subfamily.

The catalysed reaction is L-seryl-[protein] + ATP = O-phospho-L-seryl-[protein] + ADP + H(+). The enzyme catalyses L-threonyl-[protein] + ATP = O-phospho-L-threonyl-[protein] + ADP + H(+). May be involved in plant development processes. The chain is Serine/threonine-protein kinase Nek2 (NEK2) from Oryza sativa subsp. indica (Rice).